A 250-amino-acid chain; its full sequence is uncharacterized protein (250 aa).

Residues 4–24 traverse the membrane as a helical segment; that stretch reads FKYLLFLVVFAVFFLTFAFFD.

It localises to the membrane. This is an uncharacterized protein from Methanocaldococcus jannaschii (strain ATCC 43067 / DSM 2661 / JAL-1 / JCM 10045 / NBRC 100440) (Methanococcus jannaschii).